Consider the following 660-residue polypeptide: V-type ATP synthase subunit I (660 aa).

The next 7 membrane-spanning stretches (helical) occupy residues 312–332 (FFAFVLFFSMIVNDAGYGLLF), 362–382 (ILGLGCICWGTTTTSFFGMSF), 453–473 (FIDNILMELALFIGVVHLSLG), 485–505 (IGWILFMVSAYLYVPIYLGTV), 520–540 (GQIGYYGMFGGIGLAVVLAMI), 560–580 (VLSYLRIYALGLAGAMMGATF), and 593–613 (SIVILLGHSVNIILSIMGGVI).

The protein belongs to the V-ATPase 116 kDa subunit family.

It is found in the cell membrane. Produces ATP from ADP in the presence of a proton gradient across the membrane. This is V-type ATP synthase subunit I (atpI) from Chlamydia pneumoniae (Chlamydophila pneumoniae).